Here is a 210-residue protein sequence, read N- to C-terminus: Redox-sensing transcriptional repressor Rex (210 aa).

Residues 15 to 54 (LYYRIFKRFNTDGIEKASSKQIADALGIDSATVRRDFSYF) constitute a DNA-binding region (H-T-H motif). 89–94 (GCGNIG) contacts NAD(+).

This sequence belongs to the transcriptional regulatory Rex family. As to quaternary structure, homodimer.

It localises to the cytoplasm. Functionally, modulates transcription in response to changes in cellular NADH/NAD(+) redox state. In Streptococcus agalactiae serotype Ia (strain ATCC 27591 / A909 / CDC SS700), this protein is Redox-sensing transcriptional repressor Rex.